Reading from the N-terminus, the 219-residue chain is Small ribosomal subunit protein uS3 (219 aa).

The region spanning 41–110 is the KH type-2 domain; sequence IRKIINTEYS…DVSINICEVK (70 aa).

It belongs to the universal ribosomal protein uS3 family. In terms of assembly, part of the 30S ribosomal subunit. Forms a tight complex with proteins S10 and S14.

Its function is as follows. Binds the lower part of the 30S subunit head. Binds mRNA in the 70S ribosome, positioning it for translation. This Orientia tsutsugamushi (strain Ikeda) (Rickettsia tsutsugamushi) protein is Small ribosomal subunit protein uS3.